Here is an 8903-residue protein sequence, read N- to C-terminus: MDAPDIQAPSGSCRTTLGKVAADIFEMNVETLDWDMSFIQMGGDSILAIDFIVRCRDEGIWVDMMDLLTVDTLAELADSIDEQNGVTADVANSSDLNEHETHQENGENINATLPVADRPLRFASMEIAHVKDASLVSSALESLITRHSALRSVWSVSSTGEYTLTTKPTAMAYESQPFFLAEASEPTKMNDAFELLKNALRSDGAPPLGCLFISNNATTASSIIVLAADANLVDSLSMRILRTEFREFILGHALDAPPGFQFSNWVAAKCQSTTARPRTLQQPQRAMERAIATKLSSSTSSADSSSNEATITTFQITHSTTKKLFAAQTHAALRTIPAEIINAALVYVLGAHYKKNVDHLMIKTAYSVREQQNLPLDAVGCYEAEIEWEAPALSSHESAVFAVRRVCDAFATPSRNSYDTSTETLYIDCTRLQDTEDDELSSFSDTILGHGHHVSVATVAGQVHVSMQLGNEKISRESITNEFKLCLEKMLDELAQSPEMATLRDYPLIHWSYSDLDDLVADLKSQIVTIKGIESIGPSSAVQESFFISQAINPDSYINHVKVRMASADDSVPHQLDTEKLVYAWGNIVKRHAVLRTAFVESRDRPGKYDQLVFNPIAVLPRVTVFSCTPEASNTPSFQTGKFEVPMRLCVYEISTSELQLELDISHALVDGHSAKILLHDLRASYLQDTYFSELAPLPYTDFAFHQQTVLDAGETSDGVAYWTSYMNKAGESHLPLITTNPNLKNLETAHRTISLPAGKLRAICGQLSITPANLFHIAWALALRRIILTDTITFSYIVSGRNGSLENSEATVGPFINTLPFSLALAPETSVTEVLDLSKRDWQEGASFHNVPISELAVSKTRSLKRLGNTLLSIEREGSSSHPFADGSDLSLSARTSATDFDLTANIRFDEERIEFSVEYWASRIAWPVAKAQMSAFEDAVSFLLDGVNMSIRDFPTHGIQDKMAFLEWNTAPARLESCVHDLVLEKMAAQPTALAISAWDGEMTYGQLDHASYRVACELVEFGITPDTMVGMCMEKSKLGVVAMLGILRAGGAVVPLGVQHPIARIKGIVADAQIPLILVDEAHKERLAELEPAAKLFAVDSFVKNDKSSPSTASSPKPCTSVGPDHVAWVIYTSGSTGAPKGVMLEHGALSTSILYHGRRLDIQSYDRLLQFAAFTFDAAIQEIITAFAFGASTCIPSEQERMDQLPAFISREKITITTLTSTVAALLHPQDVPTVRTMILMGEAVQAKVVDQWIDHATVINAYGPSECCIHSTCRPVQSSLTALNIGTAIAGATWIANPKNVGQLVPLGAPGELLLEGPLLARGYLNDPIKTAKAFVADPAFVAELNLSPGRRFYRTGDLAQQNPDGTITYLGRIDTQIKIRGQRVEIGEIEYHIGKQSGVHDAAVLYIREGPLADRLVAAVNLGESTPNADQFQGSAIQCVTGDEKDKATLQLREIQYALSQQVMHYMVPSVWIPLYAMPMNNSGKTDRRALTLWVQALSQSEIDEITAAEADDDIDESSMSTVEQELRQIWSKVLDVPLRSVTYSANFFSLGGDSITAMQVVSACRARGIIVTVRKVLDCQTIPQLALAAESQATSANEEVVTEAPFPLSPIQKMYFETVAADGLRADGETSFNQGVLLHVTRRVELAELTEALNKTVAKHAMLRARFFRTQNQEFQQKIERDVTGSYRLRAHADVANAESLHGIVAESQATLDLERGPIFAADLIERQDRQVLHLVAHHLVIDLVSWRILVQDLEEVIINKALPNPRSMAFPTWIERQHNYLDKLMDRKTEVLPVTVPATSWSYWGLVPGEEVYANRTSYQVKCDSNVVDLLSGHANAALKTEPVEVLLAALVFSFQQAFPDRDVPAIFTEGHGRETIDAVSDPSDTIGWFTTMAPVYLPQRASENAIIEVVKQVKDQRRRIPGRGMPYFGSRFSTTRCKSQFASHSPAEIIFNYAGRFQQLEREDALFRFDSEDDMNTTSKIGGRVKLLSALDVAATVEGNELLITVNFSNQSQHQDSIRSWVDAYGKCIESTVKELAAVSAPIATATDFPLAHLSDADMKTIETDSDYLAVIGCSSTAELDDILPCSPIQQGILLTQLQSPSTYCIHQTCRIRSTTTSPMDIERLIAAWKEIVSRHSILRTVLLEPLPGQEQFMQMVLKEPRIGIKRVNDISDDIAAEWLESQPTLDLSELTRPPHLLTLLTTAKGEVYCRFDISHALVDASSVSLIMQDLLSAYDGNLGPNVGSDYSSYVAYLEEQDSQDELEYWTSVLRNAEPCILSPQDPIHDNRADSTIKRVVAHIDDLSPLYKFRDTYGVSLASICQLSWALVLAMRTNSENISFGNLSSGRDVPIQNVQALVGPMINMLICRLSLDWDANASDVARNLQRQVSESFEHQRSSLASIQHALGLSRNQPLFNSTLSYKRADSDAAASPATGIYLEGLAWDDPTEYDLHTNIETSKTGMEIHMQYSTAVFSDNAATKMIEGLTRAIQAVCVGGETPLSQLQLLSVSEENKLRQWNAVATPRLERCVHELVLEKMSSHADATAISAWDGSMTYQELNNASIQLAHHLVAQGVRPEVKIGLCLDKSRLGVVAMLATLRAGGAVVPLGVQSPVARIETIVNDSEMKIVLVDRNNQERLNTLASTVQLLAVDQFAQTMSTPTDILLKEPCSSVQPDNTAWIIYTSGSTGIPKGVVLEHGSIATSMRAHGPAIGIQPQDRVSQFAAYTFDVSIAETMTTLAYGACICIPSEDDRINRLTGFLSEHKVTIATLTSTVASLVQSIDTPTIKTLVLTGEAVQPNVVDQWKQHNTTVINAYGPSESSIWATSKIVEDSKDALNIGLPLSGAFWVVNRNNIGQLVPVGSPGELLIEGPLLARGYLNDQIKTAASFVVDPAFIHDLGFTTGRRMYRTGDLVQQNDDGTMVYLGRQDSQVKIRGQRVEIGEIEYHVGKQEGVQDAAVLHMKDGPLADRLVAIVIPRNDDLKTTRGQNDAQITQIPQQFKEDTKRHLQGVKQKLSQLVMQYMVPNVWIPLVAMPVNMSGKMDRLALNRWIQSLSKDELAFMTGTEETQDPDQDKLFTTAIERQLRQVWSDVLGVSVHAVTYTSNFFSLGGDSITAMQVVSMSRSHGILVTVRTVLECQTIPELALQAKMVDGDNSQLTRVPEGPFALSPIQQMYFANISGDGIRADGNYRFNQAVSLYISTHISQEQLKHALDAVVSKHAMLRARYSQGPAGWQQWIEKDVSGGFRCQSYDAVDLDAMRQIIETSQTSLDIEHGPVFAADLIERQDNDRQVLHLVAHHLSIDLVSWRIVIQDLEQLLTNGKLPNPTTLSFPVWLERQQDSLDTFIAKMDTPESALSQLLPTSVPVIDWNYWGLSPGQEVYGSLTSLETRCDSATTSLLLDQANSALKTEPVEILLAALLSSFQQVFTDRQSPAVFTEGHGREAFDTKSELDLSETVGWFTTMTPVYIPQSAATNSIQMLQKIKDQRRRVPGRGMPYFGSRYLTSAGEEKFADHATPEILFNYFGRFQQFERDDALFQINNDDDSASSQFGDLIKLFAALDVTVAVEASELHIKTRFSRQSQHQASIQRWVQAYGNAIKSLVEELMVTAATSTATDFPLARLTDTNWEFMQKQYLVAMNLQSTAEIEDILPCSPMQQGILLTQLQSPTTYCIHQISRFQPSKSGSVSVERLISSWKHVVSRHSILRTILVEPLPGQERFVQIVLKQPHLDIIKLREITDSEHAAIATLEAQPLLNARKITSPPHRITMLQSTAGEVYCRFDISHALIDGSSMAILIRDLMSAYSEDVSSDSIASGSKYSSYVAYLEDTDHQKADLQYWTSLLADSEPCILPSEASAPESEPAQLGHVSKTISDLDALHGFRDTHNVSIASICQLAWALVLSTWTGSSDISFGNLSSGRDVPIEGVQDLVGPMINMLICHVPLDWNASVADVARKIQSQSAEAFEHQRSSLAAIQHELGLSRDKPLFNTTLSYKRITPPPSSSGSTSITFEALVQEDPTEHDLHVNIDSTPTGLQFDIQFSTAVFSSAAAETLTESLVRTVGILSQSAHLSLGNVNLMSTKDIQQLCEWNSKMPSRTELCVHDLISERLNTQPESMAISAWDGDMSYLELDAVSHTLASHLITLGLDFQRSEPMIGLCMDKSKWAVVAMLAILRAGGTVVPLGVQHPVSRIDNIVQDTSAIVVIVDRGQEQRLASLGTSTHLLAIESFFEASPPVASQSTPLTADTTPDSAAWVIYTSGSTGKPKGVVLEHGALVTNILAHGRAMNIQPGDRVLQFAAYTFDISIAEVLTTLIFGACVCVPSESERMEQLACFISRQEVTTAILTSTVAALVDPQQTPTLQTLVLTGEAVQPKVVSQWIGQATVMNCYGPSESWICTTHKIESAATASVVGPPIAGGFWVVNPGSVDQLVPIGAPGELLIEGPLLAREYLNNADKTAASFINDLAFTKELGLGSRRMYRTGDLVKYNSNGALVYIGRIDTQIKIRGQRVEIGEIENQIVDLLPGAREAVVDLITPAEVEGASPMLVAVVEYRQDEPRTDATGLSLYDPSQLTDATLEALDQLQTDIAKALPAYMIPATFLLASKLPINASGKLDRRTLRLALQDMTREELGNSTGNTSTKQAPRTTMEKKLRDLFAATLQLTPDNFGINDSFFRLGGDSVAAMKMTAAARALDLPLSVVDIFRFPILADLAEATELKCSQQQEDSRSLVPFSLWPELQQDHASSSDSYKTQLLAEAAQLCGVSASQIEDVYPCSPLQAGLMAITSQRPEAYIMRRAFKLRASFPIEQLKIAYERLTEAVSILRTRIIPSTCVDALQVVVQEKPFWHGEVGMSLEQYIAKDRSASMAYGRALSRTAIVSNEDGQFFVWTMHHSVYDGWSLTKMMGMLTQLMTGQALATTVPSSRFINYLVQQDTDQVAKFWQSHFQGANWTRFPALPSPRYQAKSSGQLRSQFQLPLNPSILETDSTVLRAAWALLVASKIGADEAVINVVLSGRMAPVEDIMNMLTPTVTTVPVRVSATKNQSINKFLKTIHDTAIDMVPFEHTGLQNIRTMVPTLGSDFDPGHTFVVQPAGESESAATMWNMDLEREATPLDAFDAYALTVECTVDSQRTGEVTVDIRYDSFVIPDDDAQKLLNQFTHIAQELAQQAATTKPLAQLQMLSEEDRFLLSKWNAHVPPRLEYTLHDAVTETMTSQPDAPAIYSWDGDMTYGEVNAASHRLASHLANQGVGPEVMVGLCMDKSKWAIVSMLAILRAGGAVVPLGISHPLARIDNIIQDTAAPLVLVDSTHQHRLQDLTAPTPLLAVDKFFEEYEAANYDSSAKLPSTVQPHHPAWVIYTSGSTGTPKGIVLEHRALATSILSHGKEFGIQAHDRVLQFAAYTFDVAIQDVIATLASGACLCVLSEYDRINRLTEFLSESNVSFAILTPTVAALIEPKDVPTVKTLVLGGEALPAKVVDQWAEHALIINGYGPSECCIHSTCAKIPLGSDARNIGRGVTANTWVVDPTDIGQLVPIGSPGELLIEGPLLARGYLNDPTKTAKSFIRDPAFLSTLNLPNGRRMYRTGDLVQQNRDGSLIYIGRRDTQVKIRGQRVEIGEIESRIVDLLPEAREAVVNLVRPAGEAADLVTLVAVIECDYAAGASHDTESELELFKPSSYSDALNRALVKLDDDLGQALPSYMVPSAYLLVPKLPLNPSGKLDRRAIQDQLQLLPRAKINSLSGLTNRKQAPTTAMEKRLQNLFCQTLMLTPEEVGVNDSFFRIGGDSIAAMKLTAVARHQNLPVSAADIFRWPRLGDLAQELEQRHELKTATLNDPAPLSLWPELSQAGTQSKSQLLANIASQCGVSVEAIEDVYPCSALQAGLMAITTQRPEAYVVQRVFKLQPSLSSQHFKAAWNQLAQSLPILRTRIVPSIHTDALQVVTRDAPVWQETQASVQDYLENDRTVPIAYGTPLSRVAIVQDQQSRYFVWTIHHSAYDGWSMGKMMEVLSQVLEGTTPSVLVPVSRFIGYLSQQDKSQTSTFWQKHFEGASCTVFPELPSRQHVVNPNKTLKSRIQISQSPGVTPFTALRAAWALVVASATGSDDALINVVLSGRLASVDGIMDLVAPTITTVPFHVPISQDLSVKEFLANVDERASDMIPYEHTGLQHIRRMVPGLGPEFSPGHVFVVQPAAESESTVAALPQMELIKSDFESEDAFHAQALTVECTVGQDLSDVEVQMRYDGNVLSTESATHLLDQFSHVVEQLALNGDKSLSQLELLTANDRQRLIEWNSTVPPRVERCIHQLVEEQMSLRPSELAIKAWDGDMTYAELDTSSRQLAQRLTQMGVGPDVMVGICMDKSKMGVVAILAILRAGGAVVPLGVTHPLTRIEGIVKDTKSPLILVDSAQKQRLASLTAQLLVVDSTLTNTLTASAQNISVQSKNVAWVVYTSGSTGTPKGVVLEHGALATSVLGHGAAYNVRSDDRILQFAAYTFDAAIQEIITTLAFGACICVPSEQDRVNRLTDFFIETGITMATLTSTVAGLVRPNMTPAVRTIILVGEAVQANVVDQWIQKATVINGYGPSECSIASTCGEIRHSSYALNIGTAIAGATWIVGSTNKLVPIGTPGELLLEGPLLARGYLNDAVKTAASFTTNAAFVEELGLSSANRRMYRTGDLVKQNIDGSITYLGRMDGQIKIRGQRVEIGEIEHHLQKHSVVGDAVVLYMKQGPLSGRLIAIVVTNDTNSTSQTAEIQHLPTGQRESANLELTDVQQSLSNQLMQYMIPSVWIALASIPVNISGKTDRLTLTRWLQSLSDDEVEALTGTEETEVDESSATNTERQLRQIWSQVLDVPIEKITFSSTFFSLGGDSITAMQVVSACRSCGLLVSVQKVLNCQTIPELAATLEVMDIVNDVDQIPEGFFELSPIQRMYFDDMAAMGLRADGENRFNQAVTLRITRPTTSEELIQATDILVAKHPMLRARFIQNQQSWQQHIEKEVAGSYRFELHEVADAQAMQSIITQSQASLNLEHGPVFAIDLIDLPTKKVLHLVAHHLVIDLVSWRVLAQNLEDLLTSGTEPNPTSLSFPSWIQKQFQFLPSSEETSESVLPVQIPASNWEYWGLVPGSERFGNRSKIEVKCDTSTTSLLTGDANYAFNTEPVEVLLAALAISFQKTFTDRSMPAVFVEGHGRETMDDKVDLSDTVGWFTTMTPVHVPMDKNESDLDVLRRTKDQRRRIPGRGLPYFASRFLGPNPDKFDNHGPAEILFNYFGRFQQLERENSVFQIEQDGESAPQLGNSVKLFAALDLSIAIEGDQLSITVHYSNKSKHQSTIRQWAESYGRTIKTLVEALVIAPPTSTATDFALARLSDSDMVAIEKDCVSNVGSTRNIEDILPCSPIQQGILLSQLQSPTTYSIYQTCRIKPSKHDSLVDAHRFLGAWKQLVAHHSILRTVLLEPLPGHEKFMQIVLREPEINVLTKSGVADAEAVEWINSRPGLDLTDRHHPPHRLTLLTTTSGQVYCRFDISHALVDASSLALIIRDLMSAYEGKLGSSSNGSNYSAYIAYLDDNNQQDDLNYWTSLLNNAEPCLVPPKEPTHTATQATIGHASQKVSDLDVLHKFRDTYGISIASICQLSWALVLATWTGSQNVSFGNLSSGRDAPIPGAQDLVGPMINMLVCHLQLDWDSKVSDAARKIQTQSSEAFEHQRVSLASIHHALGLSKDQPLFNSVMSYKRLATGESTPREIILEGLTAEDPSEYDVNVHINASSTSLDFNIQFSTTVLSQAAANKLTASLVQAVHAITQNANRSLGQLKLVLTNDEAQICKWNSFMPAGLQNRVHDHVLEQMARKPEAQAIFASDGQMSYGELDVSSRQLAHHLVSQGVGPDVVVGVCMDKSRWAVVAMLSILRAGGAVAPLGVQHPVARIDTIVKDASAPVILVDAEQEQRLDTLSNNFQLINVKSFFDTVQNTVSTSEPCTTVQSHHIAWVLYTSGSTGVPKGVMLEHGSLATSIMLHSRRFAMQSTERLLQFAAFTFDAAVFDIFAPLSHGGCTCIPSEHDRMNNLEAFAIGAKVTWGFFTPTVAALMQPSDIPSMRTLILGGEVVTAKGVDHWVKAGVKVINVYGPTECSIYSTYKHIQDTQNLRNIGTTVAAGLWVVNPVSGEQLVPIGAPGELLIEGPLLARGYLNDSAKTAASFVTDPKFVKELGLSPGRRMYRTGDLVQQNSDGTLTYLDRIGTQVKIHGQRLEIGEIESQLHDLLPESRYVCVCKKGTSLVAVIESTTPNRDTPGTSAHYIVAPGPEQEKTFEYLNSTLREKLPSYMIPSAFLVINEFPLNDNGKFDRRRIGNLLNSIPSDKWLEYTAKSQTYYAPISATEAVFCELWSQCIQQLDKPVSRTDNFFDLGGDSVTAMQLVQQLAKRGMRLATIDIFNNPVLHAMAACVSDVSDDNQEYKRFSLISTEEKSTALELVAADDTVDKQIRVIDVLPTTEFQTLMVRQIMSAARRQLNQFAFDADEACDVSVLTSAISDLVATIESLRAGFVKLPGQKYLQVVYAVWEPEIRVFYTEKSPRAFYEESSEQDLFPEPTLSRPLFDVAIIIDKITQKHRVVFRISHALYDGATLHRVWTALEALTTGQAPGYFAPIGAYLQSLQAQTTSETEDYWQQLVDGATISCVGTSSEPKVSRLGHVSGPPITLPESKQSHFNLAVAVKAAWALVFGHHANTHDIVFADVMTGRNTVDSSVADVVSCCARAVPCRITYEPDWTVEKLLDLTKQQQVNSMRHEGLELQQIAQRYMGWPQDDHEEAPDMRVSMTNYVKTSIRDLLLGATQYRRATAGFQNAYASADFSVDSVEESDGSLSVSIAYAADRISEQLAATLLHRTRVTLEKMMENPRSTVGHLLKQLD.

A Carrier 1 domain is found at 11 to 84 (GSCRTTLGKV…ELADSIDEQN (74 aa)). Residues 13–81 (CRTTLGKVAA…TLAELADSID (69 aa)) are thiolation (T) domain 1. Serine 45 bears the O-(pantetheine 4'-phosphoryl)serine mark. Adenylation (A) domain stretches follow at residues 59–736 (GIWV…SHLP) and 989–1386 (MAAQ…IKIR). The segment at 572–953 (VPHQLDTEKL…FLLDGVNMSI (382 aa)) is condensation (C) domain 1. Positions 1524–1600 (SSMSTVEQEL…QLALAAESQA (77 aa)) constitute a Carrier 2 domain. The segment at 1529–1597 (VEQELRQIWS…TIPQLALAAE (69 aa)) is thiolation (T) domain 2. Serine 1561 carries the post-translational modification O-(pantetheine 4'-phosphoryl)serine. The epimerase (E) domain 1 stretch occupies residues 1613–2050 (FPLSPIQKMY…TVKELAAVSA (438 aa)). Residues 2091-2523 (DILPCSPIQQ…LLSVSEENKL (433 aa)) are condensation (C) domain 2. The tract at residues 2546 to 2943 (MSSHADATAI…GRQDSQVKIR (398 aa)) is adenylation (A) domain 2. The Carrier 3 domain maps to 3084–3160 (LFTTAIERQL…ELALQAKMVD (77 aa)). The tract at residues 3089 to 3157 (IERQLRQVWS…TIPELALQAK (69 aa)) is thiolation (T) domain 3. Serine 3121 bears the O-(pantetheine 4'-phosphoryl)serine mark. Residues 3174-3614 (FALSPIQQMY…AIKSLVEELM (441 aa)) are epimerase (E) domain 2. A condensation (C) domain 3 region spans residues 3655 to 4093 (EDILPCSPMQ…LMSTKDIQQL (439 aa)). Positions 4114–4512 (ERLNTQPESM…GRIDTQIKIR (399 aa)) are adenylation (A) domain 3. One can recognise a Carrier 4 domain in the interval 4649-4725 (APRTTMEKKL…DLAEATELKC (77 aa)). Positions 4654–4722 (MEKKLRDLFA…ILADLAEATE (69 aa)) are thiolation (T) domain 4. Serine 4686 is modified (O-(pantetheine 4'-phosphoryl)serine). A condensation (C) domain 4 region spans residues 4775 to 5191 (EDVYPCSPLQ…AQLQMLSEED (417 aa)). The interval 5216–5614 (ETMTSQPDAP…GRRDTQVKIR (399 aa)) is adenylation (A) domain 4. Positions 5753-5829 (APTTAMEKRL…DLAQELEQRH (77 aa)) constitute a Carrier 5 domain. A thiolation (T) domain 5 region spans residues 5758–5826 (MEKRLQNLFC…RLGDLAQELE (69 aa)). Serine 5790 carries the post-translational modification O-(pantetheine 4'-phosphoryl)serine. Glutamate 5875 is a region of interest (condensation (C) domain 5). The tract at residues 6311-6702 (EEQMSLRPSE…GRMDGQIKIR (392 aa)) is adenylation (A) domain 5. The Carrier 6 domain occupies 6836-6912 (SSATNTERQL…ELAATLEVMD (77 aa)). The interval 6841–6909 (TERQLRQIWS…TIPELAATLE (69 aa)) is thiolation (T) domain 6. Position 6873 is an O-(pantetheine 4'-phosphoryl)serine (serine 6873). An epimerase (E) domain 3 region spans residues 6923–7349 (GFFELSPIQR…YGRTIKTLVE (427 aa)). The condensation (C) domain 6 stretch occupies residues 7391 to 7823 (EDILPCSPIQ…LVLTNDEAQI (433 aa)). Residues 7844-8240 (EQMARKPEAQ…LDRIGTQVKI (397 aa)) form an adenylation (A) domain 6 region. Residues 8368–8444 (APISATEAVF…AMAACVSDVS (77 aa)) form the Carrier 7 domain. Positions 8369-8441 (PISATEAVFC…VLHAMAACVS (73 aa)) are thiolation (T) domain 7. The residue at position 8405 (serine 8405) is an O-(pantetheine 4'-phosphoryl)serine. The condensation (C) domain 7 stretch occupies residues 8482-8897 (DVLPTTEFQT…MENPRSTVGH (416 aa)).

Belongs to the NRP synthetase family.

It participates in secondary metabolite biosynthesis. Its function is as follows. Nonribosomal peptide synthetase; part of the gene cluster that mediates the biosynthesis of verlamelin, a lipopeptide that exhibits antifungal activity against plant pathogenic fungi. Verlamelin is a cyclic hexadepsipeptide and is bridged by ester bonding between a 5-hydroxytetradecanoic acid moiety and a carboxyl group on the terminal Val of amide-bonded tetradecanoyl-hexapeptide D-allo-Thr-D-Ala-L-Pro-L-Gln-D-Tyr-L-Val. VlmA and vlmB are altogether regarded as essential components in the biosynthesis of 5-hydroxytetradecanoic acid. VlmA catalyzes the hydroxylation at position C5 of tetradecanoic acid produced in primary metabolism, while the precise function of vlmB still remains to be solved. To be loaded onto the waiting NRPS, 5-hydroxytetradecanoic acid is activated in the form of acyladenylate by the AMP-dependent ligase vlmC. VlmS seems to accept the fatty-acyl intermediate onto the initial module to further elongate amino acid residues by the downstream modules. In addition, in the last module at its C-terminus, vlmS contains a surplus condensation (C) domain that may be involved in cyclization, the last step to form verlamelin. The polypeptide is Nonribosomal peptide synthetase vlms (Lecanicillium sp).